A 937-amino-acid chain; its full sequence is FNIP repeat-containing protein DDB_G0271996 (937 aa).

The segment covering 1-12 has biased composition (polar residues); that stretch reads MQQPISIQQPVV. The tract at residues 1 to 60 is disordered; sequence MQQPISIQQPVVNNINNSPNNQANINNNTTNNTNNNNNNNNTTNNIANNNNSNNINNNNE. Low complexity predominate over residues 13 to 60; the sequence is NNINNSPNNQANINNNTTNNTNNNNNNNNTTNNIANNNNSNNINNNNE. 4 FNIP repeats span residues 307–350, 354–394, 396–439, and 598–640; these read FNQP…LGQR, PIPI…TLDN, FNQP…FHQN, and YNHQ…RVKS. Positions 677 to 769 form a coiled coil; it reads VEQQAQYAQQ…EEEDTNNHQH (93 aa). The span at 719–729 shows a compositional bias: low complexity; that stretch reads KQQQQQQQDNE. Disordered regions lie at residues 719-767, 794-823, and 910-937; these read KQQQ…TNNH, SNNS…EEED, and QNQN…NVKK. Over residues 751–763 the composition is skewed to acidic residues; sequence LEEEQENEEEEED. Composition is skewed to low complexity over residues 794 to 814 and 910 to 929; these read SNNS…NNNS and QNQN…NNNN. Positions 902 to 937 form a coiled coil; that stretch reads ICNNINQNQNQNNNNYNNNNNNNNNNNNNKKKNVKK.

This Dictyostelium discoideum (Social amoeba) protein is FNIP repeat-containing protein DDB_G0271996.